The primary structure comprises 154 residues: Deoxyuridine 5'-triphosphate nucleotidohydrolase (154 aa).

Substrate contacts are provided by residues 72 to 74 (RSG), Asn85, 89 to 91 (LID), and Met99.

It belongs to the dUTPase family. Mg(2+) is required as a cofactor.

The enzyme catalyses dUTP + H2O = dUMP + diphosphate + H(+). Its pathway is pyrimidine metabolism; dUMP biosynthesis; dUMP from dCTP (dUTP route): step 2/2. Its function is as follows. This enzyme is involved in nucleotide metabolism: it produces dUMP, the immediate precursor of thymidine nucleotides and it decreases the intracellular concentration of dUTP so that uracil cannot be incorporated into DNA. In Psychrobacter sp. (strain PRwf-1), this protein is Deoxyuridine 5'-triphosphate nucleotidohydrolase.